The primary structure comprises 200 residues: Max dimerization protein 3 (200 aa).

Disordered stretches follow at residues 26-56 (EHGY…DNVR) and 134-164 (LLPP…QEDL). The bHLH domain occupies 54–106 (NVRSVHNELEKHRRAQLRRCLEQLKQQVPLSMENSRHTTLSLLHRAKQHIKKL).

As to quaternary structure, efficient DNA binding requires dimerization with another bHLH protein. Binds DNA as a heterodimer with MAX.

The protein resides in the nucleus. Functionally, transcriptional repressor. Binds with MAX to form a sequence-specific DNA-binding protein complex which recognizes the core sequence 5'-CAC[GA]TG-3'. This is Max dimerization protein 3 (mxd3) from Xenopus tropicalis (Western clawed frog).